Here is a 1355-residue protein sequence, read N- to C-terminus: Transcription factor MAR1 (1355 aa).

Residues 23-52 (CTICRKRKVKCDKTRPHCNQCTKTGVAHLC) constitute a DNA-binding region (zn(2)-C6 fungal-type). Disordered regions lie at residues 586–614 (TTDN…KDTN), 918–942 (SVPS…LNQD), and 1221–1253 (PPIS…TSSL). Over residues 589–603 (NTRSGPPSNSNRNGS) the composition is skewed to low complexity. Residues 604–614 (ETPSVSPKDTN) show a composition bias toward polar residues. The segment covering 918–927 (SVPSSCNSSS) has biased composition (low complexity). The segment covering 1225 to 1238 (SAKNNMAWGTTPES) has biased composition (polar residues).

It localises to the nucleus. Transcription factor that contributes to plasma membrane sphingolipid incorporation and membrane permeability, decreasing fluconazole accumulation. Regulates 337 genes under fluconazole stress, including several related to lipid biosynthesis pathways such as RSB1, encoding a sphingoid long-chain base efflux transporter. Associates with the promoter of RSB1 in the region containing two 5'-CCCCTCC-3' motifs and increases its promoter occupancy upon fluconazole stress. This chain is Transcription factor MAR1, found in Candida glabrata (strain ATCC 2001 / BCRC 20586 / JCM 3761 / NBRC 0622 / NRRL Y-65 / CBS 138) (Yeast).